We begin with the raw amino-acid sequence, 321 residues long: Anthranilate phosphoribosyltransferase (321 aa).

5-phospho-alpha-D-ribose 1-diphosphate is bound by residues G72, 75–76 (GD), T80, 82–85 (NVST), 99–107 (KHGNVSITS), and S111. G72 lines the anthranilate pocket. S84 contacts Mg(2+). N102 lines the anthranilate pocket. R157 lines the anthranilate pocket. The Mg(2+) site is built by D216 and E217.

The protein belongs to the anthranilate phosphoribosyltransferase family. In terms of assembly, homodimer. Mg(2+) serves as cofactor.

The enzyme catalyses N-(5-phospho-beta-D-ribosyl)anthranilate + diphosphate = 5-phospho-alpha-D-ribose 1-diphosphate + anthranilate. The protein operates within amino-acid biosynthesis; L-tryptophan biosynthesis; L-tryptophan from chorismate: step 2/5. Its function is as follows. Catalyzes the transfer of the phosphoribosyl group of 5-phosphorylribose-1-pyrophosphate (PRPP) to anthranilate to yield N-(5'-phosphoribosyl)-anthranilate (PRA). The protein is Anthranilate phosphoribosyltransferase of Methanococcus maripaludis (strain C5 / ATCC BAA-1333).